A 147-amino-acid chain; its full sequence is Hemoglobin subunit beta (147 aa).

The 145-residue stretch at 3–147 (HWTAEEKQLI…VAHALARKYH (145 aa)) folds into the Globin domain. Heme b is bound by residues histidine 64 and histidine 93.

This sequence belongs to the globin family. As to quaternary structure, heterotetramer of two alpha chains and two beta chains. In terms of tissue distribution, red blood cells.

Involved in oxygen transport from the lung to the various peripheral tissues. The sequence is that of Hemoglobin subunit beta (HBB) from Cairina moschata (Muscovy duck).